The sequence spans 152 residues: Transcriptional repressor NrdR (152 aa).

A zinc finger lies at 3–34; the sequence is CPYCSYNESKVVDSRSTEDSISIRRRRECLEC. The region spanning 49-139 is the ATP-cone domain; sequence ILVIKKNLNR…VYRQFKDINT (91 aa).

This sequence belongs to the NrdR family. The cofactor is Zn(2+).

Negatively regulates transcription of bacterial ribonucleotide reductase nrd genes and operons by binding to NrdR-boxes. This chain is Transcriptional repressor NrdR, found in Clostridium tetani (strain Massachusetts / E88).